The following is a 344-amino-acid chain: Molybdate/tungstate import ATP-binding protein WtpC (344 aa).

Residues 2 to 231 (LRVESVSKDY…PVDEGVARFL (230 aa)) enclose the ABC transporter domain. 33–40 (GPSGAGKT) is a binding site for ATP. The Mop domain maps to 280 to 344 (KTSARNEFRA…SFKTSAIKVF (65 aa)).

This sequence belongs to the ABC transporter superfamily. Sulfate/tungstate importer (TC 3.A.1.6) family. In terms of assembly, the complex is composed of two ATP-binding proteins (WtpC), two transmembrane proteins (WtpB) and a solute-binding protein (WtpA).

It is found in the cell membrane. It carries out the reaction tungstate(in) + ATP + H2O = tungstate(out) + ADP + phosphate + H(+). Its function is as follows. Part of the ABC transporter complex WtpABC involved in molybdate/tungstate import. Responsible for energy coupling to the transport system. This chain is Molybdate/tungstate import ATP-binding protein WtpC (wtpC), found in Pyrococcus abyssi (strain GE5 / Orsay).